The primary structure comprises 459 residues: MNRLPSSASALACSAHALNLIEKRTLDHEEMKALNREVIKYFKEHVNPGFLEYRKSVTAGGDYGAVEWQAGSLNTLVDTQGQEFIDCLGGFGIFNVGHRNPVVVSAVQNQLAKQPLHSQELLDPLRAMLAKTLAALTPGKLKYSFFCNSGTESVEAALKLAKAYQSPRGKFTFIATSGAFHGKSLGALSATAKSTFRKPFMPLLPGFRHVPFGNIEAMRTALNECKKTGDDVAAVILEPIQGEGGVILPPPGYLTAVRKLCDEFGALMILDEVQTGMGRTGKMFACEHENVQPDILCLAKALGGGVMPIGATIATEEVFSVLFDNPFLHTTTFGGNPLACAAALATINVLLEQNLPAQAEQKGDMLLDGFRQLAREYPDLVQEARGKGMLMAIEFVDNEIGYNFASEMFRQRVLVAGTLNNAKTIRIEPPLTLTIEQCELVIKAARKALAAMRVSVEEA.

Residues 150 to 151 (GT) and Q274 each bind pyridoxal 5'-phosphate. Position 300 is an N6-(pyridoxal phosphate)lysine (K300). A pyridoxal 5'-phosphate-binding site is contributed by T332.

The protein belongs to the class-III pyridoxal-phosphate-dependent aminotransferase family. Putrescine aminotransferase subfamily. The cofactor is pyridoxal 5'-phosphate.

It carries out the reaction an alkane-alpha,omega-diamine + 2-oxoglutarate = an omega-aminoaldehyde + L-glutamate. The enzyme catalyses putrescine + 2-oxoglutarate = 1-pyrroline + L-glutamate + H2O. It catalyses the reaction cadaverine + 2-oxoglutarate = 5-aminopentanal + L-glutamate. It participates in amine and polyamine degradation; putrescine degradation; 4-aminobutanal from putrescine (transaminase route): step 1/1. Functionally, catalyzes the aminotransferase reaction from putrescine to 2-oxoglutarate, leading to glutamate and 4-aminobutanal, which spontaneously cyclizes to form 1-pyrroline. This is the first step in one of two pathways for putrescine degradation, where putrescine is converted into 4-aminobutanoate (gamma-aminobutyrate or GABA) via 4-aminobutanal. Also functions as a cadaverine transaminase in a a L-lysine degradation pathway to succinate that proceeds via cadaverine, glutarate and L-2-hydroxyglutarate. The protein is Putrescine aminotransferase of Escherichia coli O9:H4 (strain HS).